The sequence spans 343 residues: MTGVMKVKSSVFNILRIVRYKVINETVVIVFLSKFTKHIKQMNHRWTVLRNSWSLTKRHILFVTKYSDLKDIQKELLNSVEFVVFIGDFTKSIFFSDYKMDNIVCKDEMQDFRQHFKTKYKLSYMGHIFVIPHKQPTYDLLTEWLVCNIYSLQEITNINTIYFEPPHVVVFDMDSTLITDEDQVRIRDPAIYEALDALKKYNCVLCLWSYGDKEHVVNSLNKVKLDGYFKIILSGGRKAGEYQLNEEEDRYYNVYYESTPFYLNMTDVKNIPKSPRVVLWYLINHNIVLFKTLTLVDDLFDNNIYYDNFVNLSTCPVPVNDWDKWHTQIVRFIVNYDKKFKNY.

This is an uncharacterized protein from Tortricidae (ClGV).